We begin with the raw amino-acid sequence, 121 residues long: Large ribosomal subunit protein bL19 (121 aa).

It belongs to the bacterial ribosomal protein bL19 family.

Its function is as follows. This protein is located at the 30S-50S ribosomal subunit interface and may play a role in the structure and function of the aminoacyl-tRNA binding site. This Borrelia garinii subsp. bavariensis (strain ATCC BAA-2496 / DSM 23469 / PBi) (Borreliella bavariensis) protein is Large ribosomal subunit protein bL19.